The sequence spans 682 residues: Methionine--tRNA ligase (682 aa).

A 'HIGH' region motif is present at residues 15–25 (PYANGAIHLGH). Zn(2+) is bound by residues Cys146, Cys149, Cys159, and Cys162. The 'KMSKS' region signature appears at 331-335 (KMSKS). Residue Lys334 participates in ATP binding. In terms of domain architecture, tRNA-binding spans 580–682 (DFAKLDMRVA…SGVTAGMQVK (103 aa)).

It belongs to the class-I aminoacyl-tRNA synthetase family. MetG type 1 subfamily. As to quaternary structure, homodimer. Zn(2+) is required as a cofactor.

The protein localises to the cytoplasm. The enzyme catalyses tRNA(Met) + L-methionine + ATP = L-methionyl-tRNA(Met) + AMP + diphosphate. In terms of biological role, is required not only for elongation of protein synthesis but also for the initiation of all mRNA translation through initiator tRNA(fMet) aminoacylation. The chain is Methionine--tRNA ligase from Haemophilus influenzae (strain PittEE).